A 292-amino-acid polypeptide reads, in one-letter code: Acetyl-coenzyme A carboxylase carboxyl transferase subunit beta (292 aa).

One can recognise a CoA carboxyltransferase N-terminal domain in the interval 29–292 (LWSKCPECGQ…HGCESRVASS (264 aa)). Residues C33, C36, C52, and C55 each contribute to the Zn(2+) site. The C4-type zinc-finger motif lies at 33-55 (CPECGQVVYRKDLLSNASVCGNC).

Belongs to the AccD/PCCB family. Acetyl-CoA carboxylase is a heterohexamer composed of biotin carboxyl carrier protein (AccB), biotin carboxylase (AccC) and two subunits each of ACCase subunit alpha (AccA) and ACCase subunit beta (AccD). Zn(2+) serves as cofactor.

The protein resides in the cytoplasm. The enzyme catalyses N(6)-carboxybiotinyl-L-lysyl-[protein] + acetyl-CoA = N(6)-biotinyl-L-lysyl-[protein] + malonyl-CoA. The protein operates within lipid metabolism; malonyl-CoA biosynthesis; malonyl-CoA from acetyl-CoA: step 1/1. Functionally, component of the acetyl coenzyme A carboxylase (ACC) complex. Biotin carboxylase (BC) catalyzes the carboxylation of biotin on its carrier protein (BCCP) and then the CO(2) group is transferred by the transcarboxylase to acetyl-CoA to form malonyl-CoA. This Synechococcus sp. (strain CC9311) protein is Acetyl-coenzyme A carboxylase carboxyl transferase subunit beta.